We begin with the raw amino-acid sequence, 746 residues long: Actin filament-associated protein 1-like 1 (746 aa).

The disordered stretch occupies residues 88–206 (EDQKKEPEAN…RLTHQWPSEE (119 aa)). Residues 98 to 107 (HTVTKPSKTD) are compositionally biased toward polar residues. The span at 108 to 119 (SPPPLPNTPPPE) shows a compositional bias: pro residues. Residues 139-148 (SRSSSSPPNS) are compositionally biased toward low complexity. The PH 1 domain maps to 214–310 (DCHICAFLLR…WLHVVRDVTG (97 aa)). A disordered region spans residues 336 to 371 (EKQTSDSDSMPSGESARDIRENGKPKRGALSELTGT). Basic and acidic residues predominate over residues 350–359 (SARDIRENGK). Residues 406 to 497 (RCGYVGVLVN…WLGVLLAETG (92 aa)) enclose the PH 2 domain. 2 disordered regions span residues 539-596 (EVPF…TRAQ) and 723-746 (PSIY…KKGT). The segment covering 562–575 (SFSSSDTGKPSPQI) has biased composition (polar residues). Residues 591-682 (GKTRAQEDAR…VKENLKKSLA (92 aa)) are a coiled coil. Residues 736–746 (KAKEWESKKGT) show a composition bias toward basic and acidic residues.

It is found in the cytoplasm. The protein localises to the cell projection. Its subcellular location is the podosome. The protein resides in the invadopodium. It localises to the cytoskeleton. It is found in the stress fiber. In terms of biological role, may be involved in podosome and invadosome formation. In Danio rerio (Zebrafish), this protein is Actin filament-associated protein 1-like 1 (afap1l1).